Here is a 240-residue protein sequence, read N- to C-terminus: ATP-dependent dethiobiotin synthetase BioD (240 aa).

Glu-15–Phe-20 provides a ligand contact to ATP. Thr-19 contributes to the Mg(2+) binding site. Lys-40 is an active-site residue. ATP contacts are provided by residues Asp-57, Glu-118–Gly-121, and Asn-178–Arg-179. The Mg(2+) site is built by Asp-57 and Glu-118.

Belongs to the dethiobiotin synthetase family. As to quaternary structure, homodimer. Requires Mg(2+) as cofactor.

It is found in the cytoplasm. The enzyme catalyses (7R,8S)-7,8-diammoniononanoate + CO2 + ATP = (4R,5S)-dethiobiotin + ADP + phosphate + 3 H(+). It functions in the pathway cofactor biosynthesis; biotin biosynthesis; biotin from 7,8-diaminononanoate: step 1/2. Functionally, catalyzes a mechanistically unusual reaction, the ATP-dependent insertion of CO2 between the N7 and N8 nitrogen atoms of 7,8-diaminopelargonic acid (DAPA, also called 7,8-diammoniononanoate) to form a ureido ring. The sequence is that of ATP-dependent dethiobiotin synthetase BioD from Burkholderia pseudomallei (strain 1106a).